Reading from the N-terminus, the 793-residue chain is MIKDIYKTAETFHNDFYDFLKAVSTQPKKLMITGELINLYVASGYDKNSGLYEFIEKIQETISLDHSVILDVRIKIASIKFYRISLEEFLIEEISSKEFLIYKETVAKPDTLNTTLNLNFKPFYDKSPAVRDIKYIGSGVEYLNRFLSSQMFTNEERWKKNLFDFIRLHNFNGEQLILNDRIKDTKHLNNQINAALAKLGNHPANTPYENIKHILQELGFEKGLGKDAGTITHNLNLLDQLLNSPDHNALAEFISSIPMILNIAIISPHGFFGQEGVLGLPDTGGQVVYILDQVKALEKQLIDSLKKSGLNLLPKIIVLTRLIPNARGTTCNQRLEKIYGAKNSWILRVPFREYNKRVTDEWISRFEIWPYLEDFAEDSYTALLAEFKKRPDLIIGNYSDGNLVAYLLAKKFKVTQCGIAHALEKSKYLYSALYWYDLEKYYHFSMQFTADLLAINSADFLITSSFQEIAGTEKSIGQYESYMHFTMPGLYRVENGVNPFHVKFNIVSPGVNEKIYFPYPKTKWRLKETKRRIENLFFSNSEDPDVIGWLDNPEKTPIFTMSRLDRIKNISFLVRCFGESEELQQTSNLIVVAGKIDETMTDDYEEKEQIRLMHELITKYKLHNKIRWIGKLLPKDESGEAYRIIAERRGIFVQPALFEGFGLTVLEAMTSGLPVFATKYGGPLEIIQNGVNGFHIDPVNQEETTEKIVRFLSDSYIDSSVWDKLSKAAIKRVTEKYSWKLYSKRLLSLAKLYGFWKYATNLEHEDINAYLDLIYHTIYKSRAKILLEEHMKR.

Residues 259-738 (MILNIAIISP…AIKRVTEKYS (480 aa)) are GT-B glycosyltransferase.

Belongs to the glycosyltransferase 1 family. As to quaternary structure, homotetramer.

It carries out the reaction an NDP-alpha-D-glucose + D-fructose = a ribonucleoside 5'-diphosphate + sucrose + H(+). In terms of biological role, catalyzes the reversible conversion of sucrose and a nucleotide disphosphate (NDP) into fructose and NDP-glucose; although the reaction is freely reversible in vitro, the physiological reaction seems to be sucrose cleavage. Unlike characterized plant enzymes prefers ADP as a cosubstrate, whereas plants prefer UDP. Its preference for ADP over UDP suggests it may directly link sucrose and glycogen metabolism. In Melioribacter roseus (strain JCM 17771 / P3M-2), this protein is Sucrose synthase.